Consider the following 313-residue polypeptide: Methionyl-tRNA formyltransferase (313 aa).

109–112 (SLLP) provides a ligand contact to (6S)-5,6,7,8-tetrahydrofolate.

It belongs to the Fmt family.

It carries out the reaction L-methionyl-tRNA(fMet) + (6R)-10-formyltetrahydrofolate = N-formyl-L-methionyl-tRNA(fMet) + (6S)-5,6,7,8-tetrahydrofolate + H(+). Attaches a formyl group to the free amino group of methionyl-tRNA(fMet). The formyl group appears to play a dual role in the initiator identity of N-formylmethionyl-tRNA by promoting its recognition by IF2 and preventing the misappropriation of this tRNA by the elongation apparatus. This is Methionyl-tRNA formyltransferase from Thermotoga neapolitana (strain ATCC 49049 / DSM 4359 / NBRC 107923 / NS-E).